The chain runs to 396 residues: 1-deoxy-D-xylulose 5-phosphate reductoisomerase (396 aa).

Positions 15, 16, 17, 18, 41, and 129 each coordinate NADPH. K130 is a binding site for 1-deoxy-D-xylulose 5-phosphate. Residue E131 participates in NADPH binding. D155 contributes to the Mn(2+) binding site. 1-deoxy-D-xylulose 5-phosphate-binding residues include S156, E157, S182, and H205. Residue E157 participates in Mn(2+) binding. Residue G211 coordinates NADPH. 1-deoxy-D-xylulose 5-phosphate-binding residues include S218, N223, K224, and E227. E227 provides a ligand contact to Mn(2+).

This sequence belongs to the DXR family. It depends on Mg(2+) as a cofactor. Mn(2+) serves as cofactor.

It catalyses the reaction 2-C-methyl-D-erythritol 4-phosphate + NADP(+) = 1-deoxy-D-xylulose 5-phosphate + NADPH + H(+). It participates in isoprenoid biosynthesis; isopentenyl diphosphate biosynthesis via DXP pathway; isopentenyl diphosphate from 1-deoxy-D-xylulose 5-phosphate: step 1/6. Functionally, catalyzes the NADPH-dependent rearrangement and reduction of 1-deoxy-D-xylulose-5-phosphate (DXP) to 2-C-methyl-D-erythritol 4-phosphate (MEP). The chain is 1-deoxy-D-xylulose 5-phosphate reductoisomerase from Xanthomonas oryzae pv. oryzae (strain PXO99A).